Reading from the N-terminus, the 403-residue chain is S-adenosylmethionine synthase (403 aa).

H15 lines the ATP pocket. D17 is a Mg(2+) binding site. Position 43 (E43) interacts with K(+). L-methionine-binding residues include E56 and Q99. The tract at residues 99–109 (QSPHIAQGVDR) is flexible loop. ATP is bound by residues 166–168 (DAK), 232–233 (KF), D241, 247–248 (RK), A264, and K268. Residue D241 participates in L-methionine binding. Residue K272 participates in L-methionine binding.

This sequence belongs to the AdoMet synthase family. Homotetramer; dimer of dimers. It depends on Mg(2+) as a cofactor. K(+) serves as cofactor.

The protein localises to the cytoplasm. It carries out the reaction L-methionine + ATP + H2O = S-adenosyl-L-methionine + phosphate + diphosphate. It functions in the pathway amino-acid biosynthesis; S-adenosyl-L-methionine biosynthesis; S-adenosyl-L-methionine from L-methionine: step 1/1. Its function is as follows. Catalyzes the formation of S-adenosylmethionine (AdoMet) from methionine and ATP. The overall synthetic reaction is composed of two sequential steps, AdoMet formation and the subsequent tripolyphosphate hydrolysis which occurs prior to release of AdoMet from the enzyme. This chain is S-adenosylmethionine synthase, found in Stenotrophomonas maltophilia (strain K279a).